The sequence spans 106 residues: HIG1 domain family member 2A (106 aa).

N-acetylalanine is present on Ala2. Residues 20–106 form the HIG1 domain; the sequence is VIEGFSPTVY…LAASAMKSQA (87 aa). The next 2 helical transmembrane spans lie at 47–67 and 83–103; these read PMVP…LYCF and IAAQ…SAMK.

Associates with cytochrome c oxidase (COX, complex IV); proposed complex component.

It is found in the mitochondrion membrane. The protein localises to the mitochondrion inner membrane. Proposed subunit of cytochrome c oxidase (COX, complex IV), which is the terminal component of the mitochondrial respiratory chain that catalyzes the reduction of oxygen to water. May be involved in cytochrome c oxidase activity. May play a role in the assembly of respiratory supercomplexes. This is HIG1 domain family member 2A (Higd2a) from Mus musculus (Mouse).